The primary structure comprises 257 residues: Thiazole synthase (257 aa).

K97 functions as the Schiff-base intermediate with DXP in the catalytic mechanism. 1-deoxy-D-xylulose 5-phosphate-binding positions include G158, 184–185, and 206–207; these read AG and NT.

This sequence belongs to the ThiG family. As to quaternary structure, homotetramer. Forms heterodimers with either ThiH or ThiS.

It is found in the cytoplasm. The catalysed reaction is [ThiS sulfur-carrier protein]-C-terminal-Gly-aminoethanethioate + 2-iminoacetate + 1-deoxy-D-xylulose 5-phosphate = [ThiS sulfur-carrier protein]-C-terminal Gly-Gly + 2-[(2R,5Z)-2-carboxy-4-methylthiazol-5(2H)-ylidene]ethyl phosphate + 2 H2O + H(+). Its pathway is cofactor biosynthesis; thiamine diphosphate biosynthesis. In terms of biological role, catalyzes the rearrangement of 1-deoxy-D-xylulose 5-phosphate (DXP) to produce the thiazole phosphate moiety of thiamine. Sulfur is provided by the thiocarboxylate moiety of the carrier protein ThiS. In vitro, sulfur can be provided by H(2)S. The protein is Thiazole synthase of Phocaeicola vulgatus (strain ATCC 8482 / DSM 1447 / JCM 5826 / CCUG 4940 / NBRC 14291 / NCTC 11154) (Bacteroides vulgatus).